The primary structure comprises 163 residues: Nucleotide-binding protein ROP_16630 (163 aa).

The protein belongs to the YajQ family.

Its function is as follows. Nucleotide-binding protein. In Rhodococcus opacus (strain B4), this protein is Nucleotide-binding protein ROP_16630.